Here is a 555-residue protein sequence, read N- to C-terminus: MSNEDETTRLMSSDEMDYLLETAGINALEEIISQNDSTGINLDTNETAQDSSYDSIRRSPSILSVAKSVEGEHGRRKLLCLYGLVMIICIAESISMTATIPLVMDKVAEGISDENGHYDSVAVQTIVSSISSSTMMIAGAISIFMAGKWGELSDRIGRVRVFKYMSGIRVIGLLTHVFTLSSKMKYHKWAIVLTACIVPSFGGLFALVANGNSYVSDIVKTEHRMVTIGIMMSCIYATMGVGPMFGSFLVKWTHGNGFIPIYTSIAFVILALIICETIMVEPRHETQMAHSQSTYTKRREKLRSQSGSDDARNYQSVTYGKFQIMRLMDLLAPVKKLWLKPDSAGSLVPRHTVILLIVLDILFVCGTTSCMPALILFSTYEYKWHAVELGYFISILGIGRGVVLLVVSPTLLYTLKRIYQHLNHSIDKIDIFCIQFSMIVITLSLFVMIRFGEKTPTSMIIFALLQALSAFCSPTLQSGIIKYTSKKHTGEMFGAMALVRSCVMLVIPPILLKLYGSTVSVNPSLFMYIPFSTSIVAILLTFFLRIYKNPPLDGP.

Residues 1–83 (MSNEDETTRL…GRRKLLCLYG (83 aa)) are Extracellular-facing. The chain crosses the membrane as a helical span at residues 84 to 104 (LVMIICIAESISMTATIPLVM). The Cytoplasmic segment spans residues 105–125 (DKVAEGISDENGHYDSVAVQT). A helical transmembrane segment spans residues 126–146 (IVSSISSSTMMIAGAISIFMA). The Extracellular segment spans residues 147–188 (GKWGELSDRIGRVRVFKYMSGIRVIGLLTHVFTLSSKMKYHK). A helical membrane pass occupies residues 189-209 (WAIVLTACIVPSFGGLFALVA). Residues 210–229 (NGNSYVSDIVKTEHRMVTIG) lie on the Cytoplasmic side of the membrane. The chain crosses the membrane as a helical span at residues 230–250 (IMMSCIYATMGVGPMFGSFLV). Topologically, residues 251–257 (KWTHGNG) are extracellular. Residues 258-278 (FIPIYTSIAFVILALIICETI) form a helical membrane-spanning segment. Over 279-356 (MVEPRHETQM…LVPRHTVILL (78 aa)) the chain is Cytoplasmic. Residues 289-311 (AHSQSTYTKRREKLRSQSGSDDA) form a disordered region. A helical membrane pass occupies residues 357-377 (IVLDILFVCGTTSCMPALILF). At 378 to 386 (STYEYKWHA) the chain is on the extracellular side. The chain crosses the membrane as a helical span at residues 387 to 407 (VELGYFISILGIGRGVVLLVV). The Cytoplasmic segment spans residues 408–428 (SPTLLYTLKRIYQHLNHSIDK). Residues 429 to 449 (IDIFCIQFSMIVITLSLFVMI) traverse the membrane as a helical segment. Residues 450–459 (RFGEKTPTSM) lie on the Extracellular side of the membrane. A helical transmembrane segment spans residues 460–480 (IIFALLQALSAFCSPTLQSGI). Topologically, residues 481–491 (IKYTSKKHTGE) are cytoplasmic. A helical transmembrane segment spans residues 492-512 (MFGAMALVRSCVMLVIPPILL). Residues 513-523 (KLYGSTVSVNP) are Extracellular-facing. Residues 524-544 (SLFMYIPFSTSIVAILLTFFL) traverse the membrane as a helical segment. Over 545-555 (RIYKNPPLDGP) the chain is Cytoplasmic.

The protein localises to the membrane. This is an uncharacterized protein from Saccharomyces cerevisiae (strain ATCC 204508 / S288c) (Baker's yeast).